The sequence spans 355 residues: 3-dehydroquinate synthase (355 aa).

Residues 71-76, 105-109, 129-130, lysine 142, and lysine 151 contribute to the NAD(+) site; these read EGEERK, GVVGD, and TS. Zn(2+)-binding residues include glutamate 184, histidine 246, and histidine 263.

The protein belongs to the sugar phosphate cyclases superfamily. Dehydroquinate synthase family. The cofactor is Co(2+). Zn(2+) serves as cofactor. It depends on NAD(+) as a cofactor.

The protein resides in the cytoplasm. It carries out the reaction 7-phospho-2-dehydro-3-deoxy-D-arabino-heptonate = 3-dehydroquinate + phosphate. The protein operates within metabolic intermediate biosynthesis; chorismate biosynthesis; chorismate from D-erythrose 4-phosphate and phosphoenolpyruvate: step 2/7. Its function is as follows. Catalyzes the conversion of 3-deoxy-D-arabino-heptulosonate 7-phosphate (DAHP) to dehydroquinate (DHQ). In Streptococcus pneumoniae (strain JJA), this protein is 3-dehydroquinate synthase.